The primary structure comprises 340 residues: Methionine import ATP-binding protein MetN 1 (340 aa).

One can recognise an ABC transporter domain in the interval 2 to 242; it reads IRLENVSVDF…PQHAYTKQLV (241 aa). 39 to 46 lines the ATP pocket; it reads GTSGAGKS.

It belongs to the ABC transporter superfamily. Methionine importer (TC 3.A.1.24) family. As to quaternary structure, the complex is composed of two ATP-binding proteins (MetN), two transmembrane proteins (MetI) and a solute-binding protein (MetQ).

The protein resides in the cell inner membrane. It catalyses the reaction L-methionine(out) + ATP + H2O = L-methionine(in) + ADP + phosphate + H(+). The catalysed reaction is D-methionine(out) + ATP + H2O = D-methionine(in) + ADP + phosphate + H(+). In terms of biological role, part of the ABC transporter complex MetNIQ involved in methionine import. Responsible for energy coupling to the transport system. The protein is Methionine import ATP-binding protein MetN 1 of Pectobacterium atrosepticum (strain SCRI 1043 / ATCC BAA-672) (Erwinia carotovora subsp. atroseptica).